Here is a 183-residue protein sequence, read N- to C-terminus: Inosine triphosphate pyrophosphatase (183 aa).

8–13 (TGNKNK) provides a ligand contact to ITP. Glu36 is a binding site for Mg(2+). Residues Lys48, 64–65 (DT), Lys81, 140–143 (FGWD), Lys161, and 166–167 (HR) contribute to the ITP site.

The protein belongs to the HAM1 NTPase family. As to quaternary structure, homodimer. It depends on Mg(2+) as a cofactor. Mn(2+) serves as cofactor.

Its subcellular location is the cytoplasm. The protein resides in the nucleus. It catalyses the reaction ITP + H2O = IMP + diphosphate + H(+). It carries out the reaction dITP + H2O = dIMP + diphosphate + H(+). The enzyme catalyses XTP + H2O = XMP + diphosphate + H(+). In terms of biological role, pyrophosphatase that hydrolyzes non-canonical purine nucleotides such as inosine triphosphate (ITP), deoxyinosine triphosphate (dITP) or xanthosine 5'-triphosphate (XTP) to their respective monophosphate derivatives. The enzyme does not distinguish between the deoxy- and ribose forms. Probably excludes non-canonical purines from RNA and DNA precursor pools, thus preventing their incorporation into RNA and DNA and avoiding chromosomal lesions. The sequence is that of Inosine triphosphate pyrophosphatase from Emericella nidulans (strain FGSC A4 / ATCC 38163 / CBS 112.46 / NRRL 194 / M139) (Aspergillus nidulans).